We begin with the raw amino-acid sequence, 276 residues long: MALLDVCGAPRGQRPESALPVAGSGRRSDPGHYSFSMRSPELALPRGMQPTEFFQSLGGDGERNVQIEMAHGTTTLAFKFQHGVIAAVDSRASAGSYISALRVNKVIEINPYLLGTMSGCAADCQYWERLLAKECRLYYLRNGERISVSAASKLLSNMMCQYRGMGLSMGSMICGWDKKGPGLYYVDEHGTRLSGNMFSTGSGNTYAYGVMDSGYRPNLSPEEAYDLGRRAIAYATHRDSYSGGVVNMYHMKEDGWVKVESTDVSDLLHQYREANQ.

The disordered stretch occupies residues 1–33 (MALLDVCGAPRGQRPESALPVAGSGRRSDPGHY). The propeptide at 1–72 (MALLDVCGAP…RNVQIEMAHG (72 aa)) is removed in mature form. Phosphothreonine is present on Asp-5. The active-site Nucleophile is Thr-73.

This sequence belongs to the peptidase T1B family. As to quaternary structure, the 26S proteasome consists of a 20S proteasome core and two 19S regulatory subunits. The 20S proteasome core is composed of 28 subunits that are arranged in four stacked rings, resulting in a barrel-shaped structure. The two end rings are each formed by seven alpha subunits, and the two central rings are each formed by seven beta subunits. The catalytic chamber with the active sites is on the inside of the barrel. Component of the immunoproteasome, where it displaces the equivalent housekeeping subunit PSMB5. Component of the spermatoproteasome, a form of the proteasome specifically found in testis. Directly interacts with POMP. Interacts with TAP1. In terms of assembly, (Microbial infection) Interacts with HIV-1 TAT protein. Autocleaved. The resulting N-terminal Thr residue of the mature subunit is responsible for the nucleophile proteolytic activity.

It is found in the cytoplasm. It localises to the nucleus. The catalysed reaction is Cleavage of peptide bonds with very broad specificity.. Its function is as follows. The proteasome is a multicatalytic proteinase complex which is characterized by its ability to cleave peptides with Arg, Phe, Tyr, Leu, and Glu adjacent to the leaving group at neutral or slightly basic pH. The proteasome has an ATP-dependent proteolytic activity. This subunit is involved in antigen processing to generate class I binding peptides. Replacement of PSMB5 by PSMB8 increases the capacity of the immunoproteasome to cleave model peptides after hydrophobic and basic residues. Involved in the generation of spliced peptides resulting from the ligation of two separate proteasomal cleavage products that are not contiguous in the parental protein. Acts as a major component of interferon gamma-induced sensitivity. Plays a key role in apoptosis via the degradation of the apoptotic inhibitor MCL1. May be involved in the inflammatory response pathway. In cancer cells, substitution of isoform 1 (E2) by isoform 2 (E1) results in immunoproteasome deficiency. Required for the differentiation of preadipocytes into adipocytes. The sequence is that of Proteasome subunit beta type-8 (PSMB8) from Homo sapiens (Human).